A 926-amino-acid chain; its full sequence is Sperm-associated antigen 1 (926 aa).

TPR repeat units lie at residues 209–242 (ATRE…LPTV), 244–275 (AYNN…EPGN), and 276–309 (VKAL…EPDN). The interval 318 to 452 (EVERDLKNSE…ENPAGLKSQG (135 aa)) is disordered. 2 positions are modified to phosphoserine: S347 and S354. Positions 352-368 (GKSGRKHEDGGGDKKPA) are enriched in basic and acidic residues. Residues 369 to 379 (EPAGAARAAQP) show a composition bias toward low complexity. Position 423 is a phosphoserine (S423). The span at 428-441 (AGGGATGHPGGGQG) shows a compositional bias: gly residues. TPR repeat units follow at residues 445–478 (PAGL…LEPA), 487–520 (SILY…HPFS), 522–554 (KPLL…DCGL), 623–656 (FKAL…NNKE), 657–690 (CAIY…ADGN), and 692–724 (KAFY…DPSI). 2 stretches are compositionally biased toward basic and acidic residues: residues 758–769 (IQEVNEGKEEPG) and 784–799 (KGGK…EKLP). The segment at 758–801 (IQEVNEGKEEPGRPAGEVSMGCLASEKGGKSSRSPEDPEKLPIA) is disordered. Position 781–788 (781–788 (ASEKGGKS)) interacts with GTP. Position 791 is a phosphoserine (S791).

Present in most tissues, including lung, with the strongest expression in brain, colon, kidney, and testis. In sperm and testis, detected in particular in pachytene primary spermatocytes. Up-regulated in pancreatic tumor tissues and not in normal pancreatic tissue.

The protein resides in the cytoplasm. The protein localises to the dynein axonemal particle. May play a role in the cytoplasmic assembly of the ciliary dynein arms. May play a role in fertilization. Binds GTP and has GTPase activity. The protein is Sperm-associated antigen 1 (SPAG1) of Homo sapiens (Human).